The following is a 2431-amino-acid chain: Histone-lysine N-methyltransferase trr (2431 aa).

Disordered stretches follow at residues 34–78 (LQKR…STAP), 135–201 (DADK…ENSG), 213–235 (ASGADSSTSVGNSTGTGTPAGTP), and 759–789 (QSANQIQMATSTSTASNPSTPNPTVNATPMN). Residues 142 to 165 (YRISTPRNSQSNPLLHRNTAFTSF) show a composition bias toward polar residues. Low complexity-rich tracts occupy residues 171-183 (ASSSASSSSSTAS), 218-235 (SSTSVGNSTGTGTPAGTP), and 767-787 (ATSTSTASNPSTPNPTVNATP). An LXXLL motif 1 motif is present at residues 801–805 (LKQLL). Disordered stretches follow at residues 863–895 (PVPTATQAAGSSSSSGSVATSTTTTTVASGGSS), 918–973 (VGGE…QVKQ), 1226–1292 (HPQQ…AGGA), 1404–1433 (TSGGGSPASMSSAASAGSSSAGGGKLKGGS), and 1478–1500 (GLVGGSARTRSPSPAESPGAEKM). 3 stretches are compositionally biased toward low complexity: residues 866 to 895 (TATQAAGSSSSSGSVATSTTTTTVASGGSS), 952 to 970 (QQQQQQLHQPQQLQPSPHQ), and 1226 to 1241 (HPQQQQQQLHQNQPQN). A compositionally biased stretch (basic residues) spans 1269 to 1281 (RKRRKREVQKPRR). The segment covering 1410 to 1422 (PASMSSAASAGSS) has biased composition (low complexity). Residues 1423-1433 (SAGGGKLKGGS) are compositionally biased toward gly residues. T1486 carries the phosphothreonine modification. S1488 and S1490 each carry phosphoserine. Residues 1652-1656 (LANLL) carry the LXXLL motif 2 motif. Residues 1790–1836 (GGSAVKSSNGDSPGSFCASSTAPAEMVVKQEPEDEDEKTPSVPGNPT) are disordered. Over residues 1794–1811 (VKSSNGDSPGSFCASSTA) the composition is skewed to polar residues. A C2HC pre-PHD-type zinc finger spans residues 1895 to 1935 (TRQCVFCNQRGDGQADGPSRLLNFDVDKWVHLNCALWSNGV). The segment at 1956–2003 (QACSACHQPGATIKCFKSRCNSLYHLPCAIREECVFYKNKSVHCSVHG) adopts a PHD-type zinc-finger fold. Positions 2060 to 2064 (LSNLL) match the LXXLL motif 3 motif. The FYR N-terminal domain occupies 2061-2121 (SNLLRVGNMT…CRYICSIAEA (61 aa)). An FYR C-terminal domain is found at 2122–2209 (GCKPEFRIQV…ETLTDYRFKY (88 aa)). Residues 2291–2407 (NNVYLARSKI…RGEELSYDYK (117 aa)) form the SET domain. Positions 2415–2431 (HKIPCACGAPNCRKWMN) constitute a Post-SET domain.

The protein belongs to the class V-like SAM-binding methyltransferase superfamily. Histone-lysine methyltransferase family. TRX/MLL subfamily. Component of the MLL3/4 complex composed at least of the catalytic subunit trr, ash2, Rbbp5, Dpy-30L1, wds, hcf, ptip, Pa1, Utx, Lpt and Ncoa6. Interacts with nuclear receptor EcR in an ecdysone-dependent manner. Interacts with ash2; the interaction stabilizes trr. Widely expressed.

The protein resides in the nucleus. Its subcellular location is the chromosome. It catalyses the reaction L-lysyl(4)-[histone H3] + 3 S-adenosyl-L-methionine = N(6),N(6),N(6)-trimethyl-L-lysyl(4)-[histone H3] + 3 S-adenosyl-L-homocysteine + 3 H(+). In terms of biological role, histone methyltransferase that acts as a coactivator for the ecdysone receptor during development. Specifically trimethylates 'Lys-4' of histone H3, a specific tag for epigenetic transcriptional activation. Recruited by EcR in an ecdysone-dependent manner causing H3 'Lys-4' trimethylation at ecdysone-inducible promoters, leading to activate expression. Plays a central role in the developing compound eye, during the progression of the morphogenetic furrow and in post-furrow differentiation of the retinal epithelium, notably by activating expression of hh. Also required for wing and abdominal development. The chain is Histone-lysine N-methyltransferase trr (trr) from Drosophila melanogaster (Fruit fly).